The chain runs to 125 residues: Large ribosomal subunit protein eL32 (125 aa).

The protein belongs to the eukaryotic ribosomal protein eL32 family.

This chain is Large ribosomal subunit protein eL32 (rpl32e), found in Sulfolobus acidocaldarius (strain ATCC 33909 / DSM 639 / JCM 8929 / NBRC 15157 / NCIMB 11770).